The primary structure comprises 448 residues: UDP-N-acetylmuramoylalanine--D-glutamate ligase (448 aa).

116–122 (GSNAKST) provides a ligand contact to ATP.

It belongs to the MurCDEF family.

Its subcellular location is the cytoplasm. It carries out the reaction UDP-N-acetyl-alpha-D-muramoyl-L-alanine + D-glutamate + ATP = UDP-N-acetyl-alpha-D-muramoyl-L-alanyl-D-glutamate + ADP + phosphate + H(+). Its pathway is cell wall biogenesis; peptidoglycan biosynthesis. Its function is as follows. Cell wall formation. Catalyzes the addition of glutamate to the nucleotide precursor UDP-N-acetylmuramoyl-L-alanine (UMA). The chain is UDP-N-acetylmuramoylalanine--D-glutamate ligase from Pseudomonas syringae pv. syringae (strain B728a).